The primary structure comprises 325 residues: NADH-quinone oxidoreductase subunit H (325 aa).

The next 8 helical transmembrane spans lie at 11-31 (ILLS…CGAF), 81-101 (VIFT…FAIV), 114-134 (IGIL…LFAG), 154-174 (LSYE…AGSF), 186-206 (LWNV…GVAV), 237-257 (FFVG…TLFF), 265-285 (LPPF…FILI), and 304-324 (VCLP…LWQA).

It belongs to the complex I subunit 1 family. As to quaternary structure, NDH-1 is composed of 13 different subunits. Subunits NuoA, H, J, K, L, M, N constitute the membrane sector of the complex.

It localises to the cell inner membrane. The enzyme catalyses a quinone + NADH + 5 H(+)(in) = a quinol + NAD(+) + 4 H(+)(out). NDH-1 shuttles electrons from NADH, via FMN and iron-sulfur (Fe-S) centers, to quinones in the respiratory chain. The immediate electron acceptor for the enzyme in this species is believed to be ubiquinone. Couples the redox reaction to proton translocation (for every two electrons transferred, four hydrogen ions are translocated across the cytoplasmic membrane), and thus conserves the redox energy in a proton gradient. This subunit may bind ubiquinone. In Klebsiella pneumoniae (strain 342), this protein is NADH-quinone oxidoreductase subunit H.